Reading from the N-terminus, the 211-residue chain is Small ribosomal subunit protein uS3 (211 aa).

The region spanning 38 to 106 (LRSFVKKTFH…DVELHIVEVK (69 aa)) is the KH type-2 domain.

This sequence belongs to the universal ribosomal protein uS3 family. In terms of assembly, part of the 30S ribosomal subunit. Forms a tight complex with proteins S10 and S14.

Binds the lower part of the 30S subunit head. Binds mRNA in the 70S ribosome, positioning it for translation. The protein is Small ribosomal subunit protein uS3 of Anaplasma marginale (strain Florida).